A 244-amino-acid polypeptide reads, in one-letter code: 14-3-3 protein homolog 1 (244 aa).

The protein belongs to the 14-3-3 family.

This is 14-3-3 protein homolog 1 from Echinococcus granulosus (Hydatid tapeworm).